The primary structure comprises 530 residues: 6-phosphofructo-2-kinase/fructose-2,6-bisphosphatase 2 (530 aa).

Residues 1-15 show a composition bias toward polar residues; it reads MSGASSSEQNNNSYE. Residues 1 to 21 form a disordered region; that stretch reads MSGASSSEQNNNSYETKPPNL. Ser2 is modified (N-acetylserine). The interval 2-248 is 6-phosphofructo-2-kinase; the sequence is SGASSSEQNN…VYYLMNIHVQ (247 aa). Ser29 is modified (phosphoserine; by PKA). 45–53 is a binding site for ATP; the sequence is GLPARGKTY. Arg78 and Arg102 together coordinate beta-D-fructose 6-phosphate. Asp128 is an active-site residue. Positions 130 and 136 each coordinate beta-D-fructose 6-phosphate. Cys158 is an active-site residue. An ATP-binding site is contributed by 167–172; it reads NILEVK. The beta-D-fructose 6-phosphate site is built by Lys172, Arg193, and Tyr197. Residues 249 to 530 are fructose-2,6-bisphosphatase; that stretch reads PRTIYLCRHG…PPALASCPCH (282 aa). Position 256 (Arg256) interacts with beta-D-fructose 2,6-bisphosphate. His257 (tele-phosphohistidine intermediate) is an active-site residue. Gly269 contacts beta-D-fructose 2,6-bisphosphate. Residue Glu326 is the Proton donor/acceptor of the active site. 6 residues coordinate beta-D-fructose 2,6-bisphosphate: Tyr337, Arg351, Lys355, Tyr366, Gln392, and Arg396. ATP is bound at residue 348–351; the sequence is FALR. Residues 392–396 and Tyr428 contribute to the ATP site; that span reads QAVMR. A disordered region spans residues 446 to 512; that stretch reads RDKPTNNFPK…GPTSRRPKSH (67 aa). Residues 450–476 show a composition bias toward polar residues; sequence TNNFPKNQTPVRMRRNSFTPLSSSNTI. Ser466 is subject to Phosphoserine; by AMPK and PKA. Thr468 carries the phosphothreonine modification. Phosphothreonine; by PKC is present on Thr475. Phosphoserine is present on residues Ser483 and Ser493.

The protein in the C-terminal section; belongs to the phosphoglycerate mutase family. Homodimer. Forms a heterodimer with PFKFB3. Phosphorylation by AMPK stimulates activity.

The catalysed reaction is beta-D-fructose 2,6-bisphosphate + H2O = beta-D-fructose 6-phosphate + phosphate. It carries out the reaction beta-D-fructose 6-phosphate + ATP = beta-D-fructose 2,6-bisphosphate + ADP + H(+). With respect to regulation, phosphorylation results in the activation of the kinase activity. Synthesis and degradation of fructose 2,6-bisphosphate. The sequence is that of 6-phosphofructo-2-kinase/fructose-2,6-bisphosphatase 2 (PFKFB2) from Pongo abelii (Sumatran orangutan).